We begin with the raw amino-acid sequence, 43 residues long: uncharacterized protein (43 aa).

Positions 1 to 17 are cleaved as a signal peptide; that stretch reads MYRRLLLNLFCMVFLQA.

This is an uncharacterized protein from Helicobacter pylori (strain J99 / ATCC 700824) (Campylobacter pylori J99).